Consider the following 125-residue polypeptide: Small ribosomal subunit protein bS6 (125 aa).

A disordered region spans residues 97–125 (TEASPMKAAKEERKPLAEVENNDFEDAEE). The span at 104 to 113 (AAKEERKPLA) shows a compositional bias: basic and acidic residues. Acidic residues predominate over residues 116–125 (ENNDFEDAEE).

This sequence belongs to the bacterial ribosomal protein bS6 family.

Binds together with bS18 to 16S ribosomal RNA. The chain is Small ribosomal subunit protein bS6 from Haemophilus influenzae (strain PittEE).